Reading from the N-terminus, the 92-residue chain is Putative transcription elongation factor S-II-like protein 81R (92 aa).

The segment at 51 to 91 (GTVKCPGCGSRRVHALQRQTRSADEPMTLFAMCSECGKRWT) adopts a TFIIS-type zinc-finger fold. Residues Cys-55, Cys-58, Cys-83, and Cys-86 each contribute to the Zn(2+) site.

The chain is Putative transcription elongation factor S-II-like protein 81R from Dryophytes versicolor (chameleon treefrog).